Here is a 579-residue protein sequence, read N- to C-terminus: Lens epithelium-derived growth factor (579 aa).

In terms of domain architecture, PWWP spans 1-64 (MSRDFKPGDL…PKDIFPYSEN (64 aa)). Disordered regions lie at residues 62-81 (SENKDKYGKPNKRKGFNEGL), 88-203 (PKVK…EEAA), 215-397 (AAPV…SMDS), and 492-579 (AEQK…FENK). A compositionally biased stretch (polar residues) spans 94–107 (HQPSHPAVNTSIKE). A compositionally biased stretch (basic and acidic residues) spans 153-173 (KEMHSTKEDEEPSEKNSKEGV). Basic residues predominate over residues 184–193 (VARRGRKRKA). The Nuclear localization signal signature appears at 186-196 (RRGRKRKAEKQ). A compositionally biased stretch (low complexity) spans 215-224 (AAPVTVSPKV). Basic and acidic residues predominate over residues 261–308 (EEEKAKKKGPDEKPKKQGKKDEEGQKEEEKPKKEYDKKDGKKEAEPKR). Acidic residues predominate over residues 321–330 (DSEDEGGEEE). Residues 334-349 (KKKGGRSFQSTHRRNI) show a composition bias toward basic residues. Residues 347 to 442 (RNIMRGQHEK…SMQQAQKHTE (96 aa)) are a coiled coil. 2 stretches are compositionally biased toward basic and acidic residues: residues 352–397 (GQHE…SMDS) and 492–522 (AEQKQHEEANKTKEQWKKGTNKKNEKEKDQT). The tract at residues 387–464 (MEKKRETSMD…VSQVIMEKST (78 aa)) is integrase-binding domain (IBD). Polar residues predominate over residues 530-543 (GSETQDTNQSQHNG). Over residues 544–579 (ENAEEKDKLEVASKKKTCGEESELEKPAKESAFENK) the composition is skewed to basic and acidic residues.

It belongs to the HDGF family.

The protein localises to the nucleus. In terms of biological role, transcriptional coactivator involved in neuroepithelial stem cell differentiation and neurogenesis. Involved in particular in lens epithelial cell gene regulation and stress responses. May play an important role in lens epithelial to fiber cell terminal differentiation. May play a protective role during stress-induced apoptosis. This is Lens epithelium-derived growth factor (PSIP1) from Gallus gallus (Chicken).